Consider the following 67-residue polypeptide: UPF0253 protein VV2574 (67 aa).

The protein belongs to the UPF0253 family.

In Vibrio vulnificus (strain YJ016), this protein is UPF0253 protein VV2574.